The following is a 237-amino-acid chain: Ribonuclease PH (237 aa).

Phosphate is bound by residues Arg86 and 124 to 126 (GTR).

It belongs to the RNase PH family. Homohexameric ring arranged as a trimer of dimers.

The enzyme catalyses tRNA(n+1) + phosphate = tRNA(n) + a ribonucleoside 5'-diphosphate. Its function is as follows. Phosphorolytic 3'-5' exoribonuclease that plays an important role in tRNA 3'-end maturation. Removes nucleotide residues following the 3'-CCA terminus of tRNAs; can also add nucleotides to the ends of RNA molecules by using nucleoside diphosphates as substrates, but this may not be physiologically important. Probably plays a role in initiation of 16S rRNA degradation (leading to ribosome degradation) during starvation. This chain is Ribonuclease PH, found in Shewanella frigidimarina (strain NCIMB 400).